The sequence spans 260 residues: Malonyl-[acyl-carrier protein] O-methyltransferase (260 aa).

This sequence belongs to the methyltransferase superfamily.

It catalyses the reaction malonyl-[ACP] + S-adenosyl-L-methionine = malonyl-[ACP] methyl ester + S-adenosyl-L-homocysteine. It participates in cofactor biosynthesis; biotin biosynthesis. Its function is as follows. Converts the free carboxyl group of a malonyl-thioester to its methyl ester by transfer of a methyl group from S-adenosyl-L-methionine (SAM). It allows to synthesize pimeloyl-ACP via the fatty acid synthetic pathway. This Haemophilus influenzae (strain ATCC 51907 / DSM 11121 / KW20 / Rd) protein is Malonyl-[acyl-carrier protein] O-methyltransferase.